The chain runs to 250 residues: Small ribosomal subunit protein uS3 (250 aa).

Residues 39–111 (IRTLIKNHYP…KIQINIFEVK (73 aa)) enclose the KH type-2 domain.

Belongs to the universal ribosomal protein uS3 family. As to quaternary structure, part of the 30S ribosomal subunit. Forms a tight complex with proteins S10 and S14.

In terms of biological role, binds the lower part of the 30S subunit head. Binds mRNA in the 70S ribosome, positioning it for translation. The polypeptide is Small ribosomal subunit protein uS3 (Elm witches'-broom phytoplasma).